Reading from the N-terminus, the 227-residue chain is Rho-related GTP-binding protein RhoN (227 aa).

14–21 (GDAECGKT) serves as a coordination point for GTP. Positions 36–44 (YVPTVFENY) match the Effector region motif. GTP is bound by residues 61 to 65 (DTSGS) and 119 to 122 (CKLD). A disordered region spans residues 186–227 (HRQLRRTDSRRGLQRSTQLSGRPDRGNEGEMHKDRAKSCNLM). Basic and acidic residues predominate over residues 207-227 (RPDRGNEGEMHKDRAKSCNLM). Residue C224 is modified to Cysteine methyl ester. C224 carries S-geranylgeranyl cysteine lipidation. Residues 225 to 227 (NLM) constitute a propeptide, removed in mature form.

The protein belongs to the small GTPase superfamily. Rho family. In terms of assembly, interacts with the Rho-GAP domain of RACGAP1. Interacts with UBXD5. Interacts with PRAG1. Expressed specifically in neurons in the brain and spinal cord and also in hepatic stellate cells.

The protein localises to the cytoplasmic vesicle. Its subcellular location is the secretory vesicle. The protein resides in the acrosome membrane. In terms of biological role, may be specifically involved in neuronal and hepatic functions. Is a C3 toxin-insensitive member of the Rho subfamily. This chain is Rho-related GTP-binding protein RhoN (Rnd2), found in Mus musculus (Mouse).